Consider the following 134-residue polypeptide: TSC22 domain family protein 3 (134 aa).

An AP1-binding region spans residues 1-60; that stretch reads MNTEMYQTPMEVAVYQLHNFSISFFSSLLGGDVVSVKLDNSASGASVVALDNKIEQAMDL. Positions 76 to 97 are leucine-zipper; that stretch reads LKEQIRELVEKNSQLERENTLL. A disordered region spans residues 101 to 134; that stretch reads ASPEQLEKFQSRLSPEEPAPEAPETPEAPGGSAV. Residue serine 102 is modified to Phosphoserine. Threonine 125 is subject to Phosphothreonine. Positions 125–134 are enriched in low complexity; the sequence is TPEAPGGSAV.

It belongs to the TSC-22/Dip/Bun family. As to quaternary structure, can form homodimers, however it is likely to function as a monomer. Interacts with NFKB1. Interacts (via N-terminus) with JUN and FOS; these interactions inhibit the binding of active AP1 to its target DNA. Interacts with MYOD1. Interacts with HDAC1; this interaction affects HDAC1 activity on MYOG promoter and thus inhibits MYOD1 transcriptional activity.

It is found in the cytoplasm. Its subcellular location is the nucleus. Its function is as follows. Protects T-cells from IL2 deprivation-induced apoptosis through the inhibition of FOXO3A transcriptional activity that leads to the down-regulation of the pro-apoptotic factor BCL2L11. In macrophages, plays a role in the anti-inflammatory and immunosuppressive effects of glucocorticoids and IL10. In T-cells, inhibits anti-CD3-induced NFKB1 nuclear translocation and thereby NFKB1 DNA-binding activities. In vitro, suppresses AP-1 transcription factor complex DNA-binding activities. The sequence is that of TSC22 domain family protein 3 (Tsc22d3) from Rattus norvegicus (Rat).